A 270-amino-acid polypeptide reads, in one-letter code: Non-structural maintenance of chromosomes element 1 homolog (270 aa).

The RING-type; atypical zinc-finger motif lies at 185-226; it reads CNVCHKIAIQCQLCENCGIPLHLQCAGIYFRGIANPLCPNCK. Residues 236 to 270 are disordered; it reads LSQVSSQGPSHSQAAPVRGRNQRSRNISTVARTSR. 2 stretches are compositionally biased toward polar residues: residues 237 to 248 and 259 to 270; these read SQVSSQGPSHSQ and SRNISTVARTSR.

The protein belongs to the NSE1 family. In terms of assembly, component of the SMC5-SMC6 complex.

The protein localises to the nucleus. The protein resides in the chromosome. It is found in the telomere. The enzyme catalyses S-ubiquitinyl-[E2 ubiquitin-conjugating enzyme]-L-cysteine + [acceptor protein]-L-lysine = [E2 ubiquitin-conjugating enzyme]-L-cysteine + N(6)-ubiquitinyl-[acceptor protein]-L-lysine.. RING-type zinc finger-containing E3 ubiquitin ligase that assembles with melanoma antigen protein (MAGE) to catalyze the direct transfer of ubiquitin from E2 ubiquitin-conjugating enzyme to a specific substrate. Within MAGE-RING ubiquitin ligase complex, MAGE stimulates and specifies ubiquitin ligase activity likely through recruitment and/or stabilization of the E2 ubiquitin-conjugating enzyme at the E3:substrate complex. Involved in maintenance of genome integrity, DNA damage response and DNA repair. In Xenopus tropicalis (Western clawed frog), this protein is Non-structural maintenance of chromosomes element 1 homolog (nsmce1).